Here is a 514-residue protein sequence, read N- to C-terminus: Maturase K (514 aa).

It belongs to the intron maturase 2 family. MatK subfamily.

The protein localises to the plastid. Its subcellular location is the chloroplast. In terms of biological role, usually encoded in the trnK tRNA gene intron. Probably assists in splicing its own and other chloroplast group II introns. This is Maturase K from Erythronium grandiflorum (Yellow avalanche-lily).